Here is a 462-residue protein sequence, read N- to C-terminus: uncharacterized protein (462 aa).

Positions 12–70 (MLKKNDIIQVAISDLSHEGAGVAKHDGFVFFVDNALPEEVIDMRVLKVNKNSGFGKVEA) constitute a TRAM domain. Q294, Y323, E344, and D392 together coordinate S-adenosyl-L-methionine. Catalysis depends on C419, which acts as the Nucleophile.

Belongs to the class I-like SAM-binding methyltransferase superfamily. RNA M5U methyltransferase family.

This is an uncharacterized protein from Streptococcus pyogenes serotype M1.